A 189-amino-acid polypeptide reads, in one-letter code: HGPRTase-like protein 2 (189 aa).

The protein belongs to the purine/pyrimidine phosphoribosyltransferase family. Archaeal HPRT subfamily.

Functionally, may catalyze a purine salvage reaction, the substrate is unknown. This chain is HGPRTase-like protein 2, found in Halalkalicoccus jeotgali (strain DSM 18796 / CECT 7217 / JCM 14584 / KCTC 4019 / B3).